A 997-amino-acid polypeptide reads, in one-letter code: Sarcoplasmic/endoplasmic reticulum calcium ATPase 2 (997 aa).

Residues 1–48 are Cytoplasmic-facing; that stretch reads MENAHTKTVEEVLGYFGVNESTGLSLEQVKKLKERWGSNELPAEEGKT. The residue at position 38 (serine 38) is a Phosphoserine. A helical transmembrane segment spans residues 49–69; it reads LLELVIEQFEDLLVRILLLAA. At 70–89 the chain is on the lumenal side; that stretch reads CISFVLAWFEEGEETITAFV. Residues 90 to 110 traverse the membrane as a helical segment; the sequence is EPFVILLILVANAIVGVWQER. Over 111–253 the chain is Cytoplasmic; sequence NAENAIEALK…QERTPLQQKL (143 aa). Residues 254–273 traverse the membrane as a helical segment; sequence DEFGEQLSKVISLICIAVWI. Over 274 to 295 the chain is Lumenal; that stretch reads INIGHFNDPVHGGSWIRGAIYY. A 3'-nitrotyrosine mark is found at tyrosine 294 and tyrosine 295. Residues 296–313 form a helical membrane-spanning segment; sequence FKIAVALAVAAIPEGLPA. Residues valine 304, alanine 305, isoleucine 307, and glutamate 309 each contribute to the Ca(2+) site. The Cytoplasmic portion of the chain corresponds to 314 to 756; sequence VITTCLALGT…EEGRAIYNNM (443 aa). Aspartate 351 functions as the 4-aspartylphosphate intermediate in the catalytic mechanism. Aspartate 351 and threonine 353 together coordinate Mg(2+). Threonine 353 provides a ligand contact to ATP. Threonine 441 carries the post-translational modification Phosphothreonine. ATP is bound by residues glutamate 442, arginine 489, and lysine 514. Position 531 is a phosphoserine (serine 531). Arginine 559 serves as a coordination point for ATP. An interaction with HAX1 region spans residues 575–594; the sequence is MNLEDSANFIKYETNLTFVG. A Phosphoserine modification is found at serine 580. ATP is bound by residues threonine 624, glycine 625, and aspartate 626. Phosphoserine is present on residues serine 661 and serine 663. ATP-binding residues include arginine 677 and lysine 683. Residue aspartate 702 participates in Mg(2+) binding. Asparagine 705 contacts ATP. The helical transmembrane segment at 757–776 threads the bilayer; the sequence is KQFIRYLISSNVGEVVCIFL. Ca(2+) contacts are provided by asparagine 767 and glutamate 770. Residues 777–786 are Lumenal-facing; the sequence is TAALGFPEAL. Residues 787–807 traverse the membrane as a helical segment; the sequence is IPVQLLWVNLVTDGLPATALG. The interaction with PLN stretch occupies residues 787–807; sequence IPVQLLWVNLVTDGLPATALG. The interaction with TMEM64 and PDIA3 stretch occupies residues 788–997; that stretch reads PVQLLWVNLV…RNYLEPAILE (210 aa). Ca(2+)-binding residues include asparagine 795, threonine 798, and aspartate 799. Residues 808–827 lie on the Cytoplasmic side of the membrane; that stretch reads FNPPDLDIMNKPPRNPKEPL. Residues 828–850 form a helical membrane-spanning segment; sequence ISGWLFFRYLAIGCYVGAATVGA. Over 851-896 the chain is Lumenal; it reads AAWWFIAADGGPRVSFYQLSHFLQCKDDNPDFEGVDCAIFESPYPM. Cysteine 875 and cysteine 887 are disulfide-bonded. Residues 897–916 traverse the membrane as a helical segment; that stretch reads TMALSVLVTIEMCNALNSLS. A Ca(2+)-binding site is contributed by glutamate 907. Residues 917–929 lie on the Cytoplasmic side of the membrane; the sequence is ENQSLLRMPPWEN. A helical membrane pass occupies residues 930–948; it reads IWLVGSICLSMSLHFLILY. The segment at 931–942 is interaction with PLN; it reads WLVGSICLSMSL. The Lumenal segment spans residues 949–963; sequence VEPLPLIFQITPLNL. The helical transmembrane segment at 964-984 threads the bilayer; the sequence is TQWLMVLKISLPVILMDETLK. Residues 985–997 are Cytoplasmic-facing; the sequence is FVARNYLEPAILE.

The protein belongs to the cation transport ATPase (P-type) (TC 3.A.3) family. Type IIA subfamily. As to quaternary structure, interacts with sarcolipin (SLN); the interaction inhibits ATP2A2 Ca(2+) affinity. Interacts with phospholamban (PLN); the interaction inhibits ATP2A2 Ca(2+) affinity. Interacts with myoregulin (MRLN). Interacts with ARLN and ERLN; the interactions inhibit ATP2A2 Ca(2+) affinity. Interacts with STRIT1/DWORF; the interaction results in activation of ATP2A2. Interacts with the monomeric forms of SLN, PLN, ARLN, ERLN and STRI1/DWORF. Interacts with HAX1. Interacts with S100A8 and S100A9. Interacts with SLC35G1 and STIM1. Interacts with TMEM203. Interacts with TMEM64 and PDIA3. Interacts with TMX1. Interacts with TMX2. Interacts with VMP1; VMP1 competes with PLN and SLN to prevent them from forming an inhibitory complex with ATP2A2. Interacts with ULK1. Interacts with S100A1 in a Ca(2+)-dependent manner. Interacts with TUNAR. Interacts with FLVCR2; this interaction occurs in the absence of heme and promotes ATP2A2 proteasomal degradation; this complex is dissociated upon heme binding. Interacts with FNIP1. Interacts with TRAM2 (via C-terminus). Requires Mg(2+) as cofactor. Nitrated under oxidative stress. Nitration on the two tyrosine residues inhibits catalytic activity. Post-translationally, serotonylated on Gln residues by TGM2 in response to hypoxia, leading to its inactivation. Isoform 1 is expressed in the heart.

It is found in the endoplasmic reticulum membrane. The protein localises to the sarcoplasmic reticulum membrane. The catalysed reaction is Ca(2+)(in) + ATP + H2O = Ca(2+)(out) + ADP + phosphate + H(+). Its activity is regulated as follows. Has different conformational states with differential Ca2+ affinity. The E1 conformational state (active form) shows high Ca(2+) affinity, while the E2 state exhibits low Ca(2+) affinity. Binding of ATP allosterically increases its affinity for subsequent binding of Ca2+. Reversibly inhibited by phospholamban (PLN) at low calcium concentrations. PLN inhibits ATP2A2 Ca(2+) affinity by disrupting its allosteric activation by ATP. Inhibited by sarcolipin (SLN) and myoregulin (MRLN). The inhibition is blocked by VMP1. Enhanced by STRIT1/DWORF; STRIT1 increases activity by displacing sarcolipin (SLN), phospholamban (PLN) and myoregulin (MRLN). Stabilizes SERCA2 in its E2 state. This magnesium-dependent enzyme catalyzes the hydrolysis of ATP coupled with the translocation of calcium from the cytosol to the sarcoplasmic reticulum lumen. Involved in autophagy in response to starvation. Upon interaction with VMP1 and activation, controls ER-isolation membrane contacts for autophagosome formation. Also modulates ER contacts with lipid droplets, mitochondria and endosomes. In coordination with FLVCR2 mediates heme-stimulated switching from mitochondrial ATP synthesis to thermogenesis. Its function is as follows. Involved in the regulation of the contraction/relaxation cycle. Acts as a regulator of TNFSF11-mediated Ca(2+) signaling pathways via its interaction with TMEM64 which is critical for the TNFSF11-induced CREB1 activation and mitochondrial ROS generation necessary for proper osteoclast generation. Association between TMEM64 and SERCA2 in the ER leads to cytosolic Ca(2+) spiking for activation of NFATC1 and production of mitochondrial ROS, thereby triggering Ca(2+) signaling cascades that promote osteoclast differentiation and activation. The polypeptide is Sarcoplasmic/endoplasmic reticulum calcium ATPase 2 (ATP2A2) (Felis catus (Cat)).